We begin with the raw amino-acid sequence, 150 residues long: Ribosome-binding factor A (150 aa).

Positions 126–150 (EVARDLSHDDDEDGGADEAPRNGDE) are disordered.

This sequence belongs to the RbfA family. As to quaternary structure, monomer. Binds 30S ribosomal subunits, but not 50S ribosomal subunits or 70S ribosomes.

It localises to the cytoplasm. Functionally, one of several proteins that assist in the late maturation steps of the functional core of the 30S ribosomal subunit. Associates with free 30S ribosomal subunits (but not with 30S subunits that are part of 70S ribosomes or polysomes). Required for efficient processing of 16S rRNA. May interact with the 5'-terminal helix region of 16S rRNA. The sequence is that of Ribosome-binding factor A from Brucella abortus (strain S19).